A 515-amino-acid chain; its full sequence is Glucose-6-phosphate 1-dehydrogenase (515 aa).

Ala2 carries the post-translational modification N-acetylalanine. Phosphoserine is present on Ser8. Thr10 is subject to Phosphothreonine. Position 26 is a phosphoserine (Phe26). NADP(+) contacts are provided by residues 38–45 (GASGDLAK) and Arg72. Lys89 is modified (N6-acetyllysine). Positions 147 and 171 each coordinate NADP(+). D-glucose 6-phosphate is bound by residues Lys171, 201-205 (HYLGK), Glu239, and Asp258. N6-(2-hydroxyisobutyryl)lysine; alternate is present on Lys171. Lys171 bears the N6-acetyllysine; alternate mark. The active-site Proton acceptor is His263. Arg357 lines the NADP(+) pocket. D-glucose 6-phosphate contacts are provided by Lys360 and Arg365. The NADP(+) site is built by Lys366, Arg370, and Arg393. Position 395 (Gln395) interacts with D-glucose 6-phosphate. NADP(+) contacts are provided by residues 401 to 403 (YTK) and 421 to 423 (DLT). At Lys403 the chain carries N6-acetyllysine. Lys432 bears the N6-acetyllysine mark. Arg487 is an NADP(+) binding site. Lys497 carries the N6-acetyllysine modification. Positions 503 and 509 each coordinate NADP(+). Tyr503 carries the phosphotyrosine modification.

The protein belongs to the glucose-6-phosphate dehydrogenase family. In terms of assembly, homotetramer; dimer of dimers. Interacts with SIRT2; the interaction is enhanced by H(2)O(2) treatment. Forms a ternary complex with ALDOB and TP53; this interaction is direct. ALDOB stabilizes the complex inhibiting G6PD activity and keeping oxidative pentose phosphate metabolism in check. In terms of processing, acetylated by ELP3 at Lys-403; acetylation inhibits its homodimerization and enzyme activity. Deacetylated by SIRT2 at Lys-403; deacetylation stimulates its enzyme activity. As to expression, isoform Long is found in lymphoblasts, granulocytes and sperm.

It localises to the cytoplasm. The protein resides in the cytosol. It is found in the membrane. It catalyses the reaction D-glucose 6-phosphate + NADP(+) = 6-phospho-D-glucono-1,5-lactone + NADPH + H(+). It participates in carbohydrate degradation; pentose phosphate pathway; D-ribulose 5-phosphate from D-glucose 6-phosphate (oxidative stage): step 1/3. Functionally, catalyzes the rate-limiting step of the oxidative pentose-phosphate pathway, which represents a route for the dissimilation of carbohydrates besides glycolysis. The main function of this enzyme is to provide reducing power (NADPH) and pentose phosphates for fatty acid and nucleic acid synthesis. This chain is Glucose-6-phosphate 1-dehydrogenase (G6PD), found in Homo sapiens (Human).